Reading from the N-terminus, the 491-residue chain is Proline--tRNA ligase (491 aa).

Belongs to the class-II aminoacyl-tRNA synthetase family. ProS type 3 subfamily. In terms of assembly, homodimer.

The protein localises to the cytoplasm. The catalysed reaction is tRNA(Pro) + L-proline + ATP = L-prolyl-tRNA(Pro) + AMP + diphosphate. Functionally, catalyzes the attachment of proline to tRNA(Pro) in a two-step reaction: proline is first activated by ATP to form Pro-AMP and then transferred to the acceptor end of tRNA(Pro). In Amoebophilus asiaticus (strain 5a2), this protein is Proline--tRNA ligase.